A 357-amino-acid polypeptide reads, in one-letter code: Alanine racemase (357 aa).

The active-site Proton acceptor; specific for D-alanine is the lysine 33. At lysine 33 the chain carries N6-(pyridoxal phosphate)lysine. Arginine 129 contacts substrate. Residue tyrosine 253 is the Proton acceptor; specific for L-alanine of the active site. A substrate-binding site is contributed by methionine 301.

Belongs to the alanine racemase family. Pyridoxal 5'-phosphate is required as a cofactor.

The enzyme catalyses L-alanine = D-alanine. It functions in the pathway amino-acid biosynthesis; D-alanine biosynthesis; D-alanine from L-alanine: step 1/1. Functionally, catalyzes the interconversion of L-alanine and D-alanine. May also act on other amino acids. The protein is Alanine racemase (alr) of Pseudomonas entomophila (strain L48).